The following is a 227-amino-acid chain: UPF0758 protein llmg_1515 (227 aa).

In terms of domain architecture, MPN spans 103 to 225 (QVLSSKEYGM…YYSFRERDSN (123 aa)). Zn(2+)-binding residues include His-174, His-176, and Asp-187. Positions 174–187 (HNHPSGNLQPSQAD) match the JAMM motif motif.

It belongs to the UPF0758 family.

This chain is UPF0758 protein llmg_1515, found in Lactococcus lactis subsp. cremoris (strain MG1363).